A 384-amino-acid polypeptide reads, in one-letter code: BTB and MATH domain-containing protein 34 (384 aa).

The stretch at 41–127 forms a coiled coil; it reads LNGNTTLKRI…ELKFQKEQLK (87 aa). The MATH domain occupies 167-277; the sequence is EFSHTFNSVA…VFNFGEYEEI (111 aa). The BTB domain maps to 317-380; that stretch reads SDAVMIVKDE…LYGEPALTGR (64 aa).

In Caenorhabditis elegans, this protein is BTB and MATH domain-containing protein 34 (bath-34).